Consider the following 303-residue polypeptide: tRNA pseudouridine synthase B (303 aa).

The Nucleophile role is filled by Asp-46.

Belongs to the pseudouridine synthase TruB family. Type 1 subfamily.

The enzyme catalyses uridine(55) in tRNA = pseudouridine(55) in tRNA. In terms of biological role, responsible for synthesis of pseudouridine from uracil-55 in the psi GC loop of transfer RNAs. This chain is tRNA pseudouridine synthase B, found in Hydrogenovibrio crunogenus (strain DSM 25203 / XCL-2) (Thiomicrospira crunogena).